Here is a 793-residue protein sequence, read N- to C-terminus: Facilitated trehalose transporter Tret1 (793 aa).

At 1 to 326 the chain is on the cytoplasmic side; the sequence is MNRKVGPVLE…LEVYRPTTNP (326 aa). Disordered regions lie at residues 99–148 and 213–235; these read EKAK…EHKS and RHIS…FEPS. Residues 104 to 113 are compositionally biased toward low complexity; the sequence is KSSLKSSRVS. Residues 115 to 125 are compositionally biased toward acidic residues; the sequence is DQEDDRFDEDE. The span at 213–223 shows a compositional bias: basic and acidic residues; that stretch reads RHISFKFDKEP. Residues 327-347 traverse the membrane as a helical segment; it reads IYIWTQVLAALSVSLGSMVVG. Residues 348–376 lie on the Extracellular side of the membrane; sequence FSSAYTSPALVSMKDRNITSFEVTDQSGS. An N-linked (GlcNAc...) asparagine glycan is attached at N364. A helical membrane pass occupies residues 377–397; the sequence is WVGGIMPLAGLAGGILGGPMI. Residues 398–411 are Cytoplasmic-facing; sequence EYLGRKNTILATAT. Residues 412-432 traverse the membrane as a helical segment; it reads PFIISWLLIGCATHVAMVLVG. Over 433-434 the chain is Extracellular; the sequence is RA. The chain crosses the membrane as a helical span at residues 435 to 455; that stretch reads LSGLCVGIASLSLPVYLGETV. Over 456–460 the chain is Cytoplasmic; the sequence is QPEVR. A helical transmembrane segment spans residues 461–481; it reads GTLGLLPTAFGNIGILLCFVA. Residues 482-488 lie on the Extracellular side of the membrane; that stretch reads GKYLDWS. The helical transmembrane segment at 489 to 509 threads the bilayer; it reads GLAFLGAALPIPFLLLMFLIP. At 510–572 the chain is on the cytoplasmic side; that stretch reads ETPRWYVSRN…DLLNKANLKP (63 aa). The chain crosses the membrane as a helical span at residues 573–593; that stretch reads LLISLGLMFFQQLSGINAVIF. Topologically, residues 594–609 are extracellular; that stretch reads YTVQIFQSAGSTIDEK. Residues 610-630 traverse the membrane as a helical segment; that stretch reads LCTIIVGVVNFIATFIATVLI. The Cytoplasmic segment spans residues 631–636; sequence DRLGRK. Residues 637–657 traverse the membrane as a helical segment; the sequence is ILLYISDVAMIITLMTLGTFF. Over 658 to 668 the chain is Extracellular; it reads YMKNNGDDVSE. Residues 669-689 form a helical membrane-spanning segment; sequence IGWLPLAAFVVFVVGFSLGFG. Residues 690 to 703 lie on the Cytoplasmic side of the membrane; that stretch reads PIPWLMMGEILPGK. The chain crosses the membrane as a helical span at residues 704-724; sequence IRGSAASVATAFNWSCTFVVT. Residues 725 to 737 are Extracellular-facing; that stretch reads KTFADITASIGNH. The helical transmembrane segment at 738–758 threads the bilayer; it reads GAFWMFGSICIVGLLFVIVYV. Residues 759-793 lie on the Cytoplasmic side of the membrane; it reads PETQGKSLEDIERKMMGRVRRMSSVANIKPLSFNM.

The protein belongs to the major facilitator superfamily. Sugar transporter (TC 2.A.1.1) family. Trehalose transporter subfamily.

The protein localises to the cell membrane. In terms of biological role, high-capacity facilitative transporter for trehalose. Does not transport maltose, sucrose or lactose. Mediates the bidirectional transfer of trehalose. Responsible for the transport of trehalose synthesized in the fat body and the incorporation of trehalose into other tissues that require a carbon source, thereby regulating trehalose levels in the hemolymph. The sequence is that of Facilitated trehalose transporter Tret1 from Anopheles gambiae (African malaria mosquito).